The sequence spans 799 residues: 1,4-alpha-glucan-branching enzyme 2, chloroplastic/amyloplastic (799 aa).

The transit peptide at 1-57 (MAFRVSGAVLGGAVRAPRLTGGGEGSLVFRHTGLFLTRGARVGCSGTHGAMRAAAAA) directs the protein to the chloroplast. Residues Trp-196 and Lys-232 each coordinate (1,4-alpha-D-glucosyl)n. The active-site Nucleophile is the Asp-447. The active-site Proton donor is the Glu-502.

It belongs to the glycosyl hydrolase 13 family. GlgB subfamily. Monomer.

It localises to the plastid. Its subcellular location is the chloroplast. It is found in the amyloplast. The enzyme catalyses Transfers a segment of a (1-&gt;4)-alpha-D-glucan chain to a primary hydroxy group in a similar glucan chain.. It participates in glycan biosynthesis; starch biosynthesis. Its function is as follows. Catalyzes the formation of the alpha-1,6-glucosidic linkages in starch by scission of a 1,4-alpha-linked oligosaccharide from growing alpha-1,4-glucan chains and the subsequent attachment of the oligosaccharide to the alpha-1,6 position. The chain is 1,4-alpha-glucan-branching enzyme 2, chloroplastic/amyloplastic (SBE1) from Zea mays (Maize).